Here is a 931-residue protein sequence, read N- to C-terminus: Myocardin-related transcription factor A (931 aa).

The mediates interaction with SCAI and ACTB stretch occupies residues 1-256; sequence MPPLKSPAAF…KQDRGAPPMD (256 aa). Residue Ser-6 is modified to Phosphoserine. An intervening spacer sequence 1 region spans residues 6–23; the sequence is SPAAFHEQRRSLERARTE. An RPEL 1 repeat occupies 24-49; that stretch reads DYLKRKIRSRPERSELVRMHILEETS. The Bipartite Nuclear localization signal signature appears at 27 to 65; the sequence is KRKIRSRPERSELVRMHILEETSAEPSLQAKQLKLKRAR. Residues 50–67 form an intervening spacer sequence 2 region; the sequence is AEPSLQAKQLKLKRARLA. An RPEL 2 repeat occupies 68–93; the sequence is DDLNEKIAQRPGPMELVEKNILPVES. Disordered regions lie at residues 110–256 and 290–344; these read ADSS…PPMD and PAPP…GALP. A phosphoserine mark is found at Ser-124, Ser-139, and Ser-156. Positions 151 to 162 are enriched in polar residues; the sequence is SATSASPTQVVS. The span at 180 to 189 shows a compositional bias: pro residues; it reads PPLPPPPLLP. Residues 191–215 show a composition bias toward polar residues; the sequence is SLTNGTTIPTAKSTPTLIKQSQPKS. The segment covering 216-231 has biased composition (basic and acidic residues); it reads ASEKSQRSKKAKELKP. Thr-305 bears the Phosphothreonine mark. Ser-310 and Ser-312 each carry phosphoserine. Low complexity predominate over residues 310-320; that stretch reads SLSTTNSSSSS. A Phosphothreonine modification is found at Thr-313. A phosphoserine mark is found at Ser-317, Ser-320, and Ser-333. The SAP domain maps to 347–381; it reads LDDMKVAELKQELKLRSLPVSGTKTELIERLRAYQ. 2 positions are modified to phosphoserine: Ser-385 and Ser-446. The segment at 444-476 is disordered; sequence FGSTGSTPPVSPTPSERSLLSTGDENSTPGDTF. Phosphothreonine is present on Thr-447. A Phosphoserine modification is found at Ser-449. Thr-450 is subject to Phosphothreonine. A Phosphoserine modification is found at Ser-454. Thr-456 is subject to Phosphothreonine. Residue Ser-458 is modified to Phosphoserine. A compositionally biased stretch (polar residues) spans 459–473; the sequence is ERSLLSTGDENSTPG. Residues Ser-482, Ser-492, Ser-507, and Ser-511 each carry the phosphoserine modification. Positions 515 to 563 form a coiled coil; it reads RAELEGRDKDQMLQEKDKQIEALTRMLRQKQQLVERLKLQLEQEKRAQQ. 3 disordered regions span residues 558–577, 674–746, and 763–816; these read EKRA…PVKQ, KNAD…SSSQ, and ADFK…RLED. A compositionally biased stretch (low complexity) spans 678–694; that stretch reads SPGLSSGSPQQPSSQPG. Phosphoserine is present on residues Ser-685, Ser-691, and Ser-695. Residues 732–746 are compositionally biased toward polar residues; that stretch reads MSQQPKQQENGSSSQ. The span at 763 to 778 shows a compositional bias: basic and acidic residues; sequence ADFKEPPSLPGKEKPS. Positions 784 to 799 are enriched in low complexity; that stretch reads GSPLAAQPSPSAELPQ. A phosphoserine mark is found at Ser-792, Ser-807, and Ser-859.

In terms of assembly, interacts with SRF, forming the SRF-MRTFA nuclear complex which binds the 5'-CArG-3' consensus motif (CArG box) on DNA via SRF. Interacts (via RPEL repeats) with globular actin (G-actin), thereby regulating its subcellular location and activity of the complex formed with SRF. Either forms a trivalent (by binding three G-actin monomers) or pentavalent (by binding five G-actin monomers) complex with G-actin. Forms a nuclear ternary complex with SCAI and SRF, leading to suppress MRTFA-induced SRF transcriptional activity. Interacts with beta-actin (ACTB); interaction with ACTB prevents interaction with SCAI. Interacts with MRTFB. Phosphorylation at Ser-6 by Erk inhibits binding of globular actin (G-actin), unmasking the nuclear localization signal (NLS) and promoting nuclear import. In terms of tissue distribution, ubiquitously expressed, has been detected in lung, placenta, small intestine, liver, kidney, spleen, thymus, colon, muscle, heart and brain. Expressed in peripheral blood mononuclear cells (at protein level).

It localises to the cytoplasm. It is found in the nucleus. Functionally, transcription coactivator that associates with the serum response factor (SRF) transcription factor to control expression of genes regulating the cytoskeleton during development, morphogenesis and cell migration. The SRF-MRTFA complex activity responds to Rho GTPase-induced changes in cellular globular actin (G-actin) concentration, thereby coupling cytoskeletal gene expression to cytoskeletal dynamics. MRTFA binds G-actin via its RPEL repeats, regulating activity of the MRTFA-SRF complex. Activity is also regulated by filamentous actin (F-actin) in the nucleus. The polypeptide is Myocardin-related transcription factor A (Homo sapiens (Human)).